A 121-amino-acid chain; its full sequence is Large ribosomal subunit protein bL12 (121 aa).

Belongs to the bacterial ribosomal protein bL12 family. In terms of assembly, homodimer. Part of the ribosomal stalk of the 50S ribosomal subunit. Forms a multimeric L10(L12)X complex, where L10 forms an elongated spine to which 2 to 4 L12 dimers bind in a sequential fashion. Binds GTP-bound translation factors.

Forms part of the ribosomal stalk which helps the ribosome interact with GTP-bound translation factors. Is thus essential for accurate translation. The polypeptide is Large ribosomal subunit protein bL12 (Macrococcus caseolyticus (strain JCSC5402) (Macrococcoides caseolyticum)).